Consider the following 430-residue polypeptide: Glutamate-1-semialdehyde 2,1-aminomutase 2 (430 aa).

K269 is subject to N6-(pyridoxal phosphate)lysine.

The protein belongs to the class-III pyridoxal-phosphate-dependent aminotransferase family. HemL subfamily. In terms of assembly, homodimer. The cofactor is pyridoxal 5'-phosphate.

The protein resides in the cytoplasm. The enzyme catalyses (S)-4-amino-5-oxopentanoate = 5-aminolevulinate. It functions in the pathway porphyrin-containing compound metabolism; protoporphyrin-IX biosynthesis; 5-aminolevulinate from L-glutamyl-tRNA(Glu): step 2/2. The polypeptide is Glutamate-1-semialdehyde 2,1-aminomutase 2 (Lysinibacillus sphaericus (strain C3-41)).